The chain runs to 336 residues: Inositol 2-dehydrogenase (336 aa).

Belongs to the Gfo/Idh/MocA family. As to quaternary structure, homotetramer.

The enzyme catalyses myo-inositol + NAD(+) = scyllo-inosose + NADH + H(+). Functionally, involved in the oxidation of myo-inositol (MI) to 2-keto-myo-inositol (2KMI or 2-inosose). The sequence is that of Inositol 2-dehydrogenase from Paracoccus denitrificans (strain Pd 1222).